The following is a 489-amino-acid chain: N-succinylglutamate 5-semialdehyde dehydrogenase (489 aa).

Position 223 to 228 (223 to 228 (GSSRTG)) interacts with NAD(+). Catalysis depends on residues Glu-246 and Cys-280.

It belongs to the aldehyde dehydrogenase family. AstD subfamily.

The enzyme catalyses N-succinyl-L-glutamate 5-semialdehyde + NAD(+) + H2O = N-succinyl-L-glutamate + NADH + 2 H(+). Its pathway is amino-acid degradation; L-arginine degradation via AST pathway; L-glutamate and succinate from L-arginine: step 4/5. Catalyzes the NAD-dependent reduction of succinylglutamate semialdehyde into succinylglutamate. The polypeptide is N-succinylglutamate 5-semialdehyde dehydrogenase (Aeromonas hydrophila subsp. hydrophila (strain ATCC 7966 / DSM 30187 / BCRC 13018 / CCUG 14551 / JCM 1027 / KCTC 2358 / NCIMB 9240 / NCTC 8049)).